The primary structure comprises 279 residues: MNKKNREVTSSWFTNLRDLVCAEFEKIEEEYAKAKGLKPGKFVRSSWERDGGGGGVMSVMKGEVFEKVGVNISTVFGEFSKAFRAEIPGAELDGKFFATGISLVAHLKSPLIPAMHFNTRYIETSKNWFGGGGDLTPFYPEEDETAKFHAAFKEACDKYDSGYYPKFKKQCDEYFYLKHRKEPRGVGGIFYDYLNSGNFEQDFSFTQDVGKALLSVYPEIVRNKLFLPWTDEQKEYQLIRRGRYVEFNLLYDRGTKFGLMTDGNVEAILMSLPPEVKWA.

Ser102 serves as a coordination point for substrate. A divalent metal cation-binding residues include His106 and His116. His116 (proton donor) is an active-site residue. 118–120 provides a ligand contact to substrate; it reads NTR. A divalent metal cation is bound by residues His149 and His179. Residues 244–279 form an important for dimerization region; it reads YVEFNLLYDRGTKFGLMTDGNVEAILMSLPPEVKWA.

It belongs to the aerobic coproporphyrinogen-III oxidase family. In terms of assembly, homodimer. It depends on a divalent metal cation as a cofactor.

The protein localises to the cytoplasm. It catalyses the reaction coproporphyrinogen III + O2 + 2 H(+) = protoporphyrinogen IX + 2 CO2 + 2 H2O. It participates in porphyrin-containing compound metabolism; protoporphyrin-IX biosynthesis; protoporphyrinogen-IX from coproporphyrinogen-III (O2 route): step 1/1. In terms of biological role, involved in the heme biosynthesis. Catalyzes the aerobic oxidative decarboxylation of propionate groups of rings A and B of coproporphyrinogen-III to yield the vinyl groups in protoporphyrinogen-IX. This is Oxygen-dependent coproporphyrinogen-III oxidase from Rickettsia bellii (strain OSU 85-389).